Reading from the N-terminus, the 950-residue chain is MVFTPEDRLGKQCLLLPLLLLAAWKVGSGQLHYSVPEEAKHGTFVGRIAQDLGLELAELVPRLFRMASKDREDLLEVNLQNGILFVNSRIDREELCGRSAECSIHLEVIVDRPLQVFHVDVEVRDINDNPPLFPVEEQRVLIYESRLPDSVFPLEGASDADVGSNSILTYKLSSSEYFGLDVKINSDDNKQIGLLLKKSLDREEAPAHNLFLTATDGGKPELTGTVQLLVTVLDVNDNAPTFEQSEYEVRIFENADNGTTVIRLNASDRDEGANGAISYSFNSLVAAMVIDHFSIDRNTGEIVIRGNLDFEQENLYKILIDATDKGHPPMAGHCTVLVRILDKNDNVPEIALTSLSLPVREDAQFGTVIALISVNDLDSGANGQVNCSLTPHVPFKLVSTFKNYYSLVLDSALDRESVSAYELVVTARDGGSPSLWATASLSVEVADMNDNAPAFAQPEYTVFVKENNPPGCHIFTVSARDADAQENALVSYSLVERRVGERALSSYISVHAESGKVYALQPLDHEELELLQFQVSARDAGVPPLGSNVTLQVFVLDENDNAPALLAPRVGGTGGAVSELVPRSLGAGQVVAKVRAVDADSGYNAWLSYELQPPASSARFPFRVGLYTGEISTTRVLDEADSPRHRLLVLVKDHGEPALTATATVLVSLVESGQAPKASSRASVGAAGPEAALVDVNVYLIIAICAVSSLLVLTLLLYTALRCSAPPTEGACTADKPTLVCSSAVGSWSYSQQRRQRVCSGEGPPKMDLMAFSPSLSPCPIMMGKAENQDLNEDHDAKPRQPNPDWRYSASLRAGMHSSVHLEEAGILRAGPGGPDQQWPTVSSATPEPEAGEVSPPVGAGVNSNSWTFKYGPGNPKQSGPGELPDKFIIPGSPAIISIRQEPTNSQIDKSDFITFGKKEETKKKKKKKKGNKTQEKKEKGNSTTDNSDQ.

An N-terminal signal peptide occupies residues 1 to 29; that stretch reads MVFTPEDRLGKQCLLLPLLLLAAWKVGSG. The Extracellular segment spans residues 30–697; that stretch reads QLHYSVPEEA…GPEAALVDVN (668 aa). Cadherin domains are found at residues 34 to 133, 157 to 242, 243 to 350, 351 to 455, 456 to 565, and 581 to 678; these read SVPE…PPLF, ASDA…APTF, EQSE…VPEI, ALTS…APAF, AQPE…APAL, and VPRS…APKA. N-linked (GlcNAc...) asparagine glycosylation is found at N257, N265, N386, and N548. Residues 698-718 traverse the membrane as a helical segment; the sequence is VYLIIAICAVSSLLVLTLLLY. The Cytoplasmic portion of the chain corresponds to 719 to 950; it reads TALRCSAPPT…GNSTTDNSDQ (232 aa). PXXP repeat units follow at residues 799–802, 832–835, 873–876, and 891–894; these read PRQP, PGGP, PGNP, and PGSP. Residues 799 to 894 are 4 X 4 AA repeats of P-X-X-P; it reads PRQPNPDWRY…PDKFIIPGSP (96 aa). The tract at residues 830–950 is disordered; the sequence is AGPGGPDQQW…GNSTTDNSDQ (121 aa). Basic and acidic residues predominate over residues 909–923; it reads DKSDFITFGKKEETK.

The protein resides in the cell membrane. It is found in the secreted. Functionally, potential calcium-dependent cell-adhesion protein. May be involved in the establishment and maintenance of specific neuronal connections in the brain. This is Protocadherin alpha-6 (PCDHA6) from Homo sapiens (Human).